Reading from the N-terminus, the 167-residue chain is MDQTEAAQRWLGIDPGLAIIGWAILDGQPDLSAHLVDYGIIETSKNLSTPERLVEIEQDIHVLLEEFSPQAIAMEMPFFSRQIKAAGGVMQALGVINLVIYREKSIQPVFLHQSSWKCHLGNGKANKAEVAAMVQNFFGLEDLPIDDSVDAIAIALAGLNGVRNDIG.

Residues D14, E75, and D147 contribute to the active site. Residues D14, E75, and D147 each contribute to the Mg(2+) site.

It belongs to the RuvC family. In terms of assembly, homodimer which binds Holliday junction (HJ) DNA. The HJ becomes 2-fold symmetrical on binding to RuvC with unstacked arms; it has a different conformation from HJ DNA in complex with RuvA. In the full resolvosome a probable DNA-RuvA(4)-RuvB(12)-RuvC(2) complex forms which resolves the HJ. Mg(2+) is required as a cofactor.

Its subcellular location is the cytoplasm. The enzyme catalyses Endonucleolytic cleavage at a junction such as a reciprocal single-stranded crossover between two homologous DNA duplexes (Holliday junction).. Its function is as follows. The RuvA-RuvB-RuvC complex processes Holliday junction (HJ) DNA during genetic recombination and DNA repair. Endonuclease that resolves HJ intermediates. Cleaves cruciform DNA by making single-stranded nicks across the HJ at symmetrical positions within the homologous arms, yielding a 5'-phosphate and a 3'-hydroxyl group; requires a central core of homology in the junction. The consensus cleavage sequence is 5'-(A/T)TT(C/G)-3'. Cleavage occurs on the 3'-side of the TT dinucleotide at the point of strand exchange. HJ branch migration catalyzed by RuvA-RuvB allows RuvC to scan DNA until it finds its consensus sequence, where it cleaves and resolves the cruciform DNA. The protein is Crossover junction endodeoxyribonuclease RuvC of Synechocystis sp. (strain ATCC 27184 / PCC 6803 / Kazusa).